The chain runs to 418 residues: Probable basic-leucine zipper transcription factor E (418 aa).

The stretch at 8–47 (IQQIQQLHMLLQQQQQQQQQQQQQQQQQQQQLQQQNFQLT) forms a coiled coil. Composition is skewed to low complexity over residues 51–71 (FQIP…NNNN) and 95–134 (INTT…NNNT). Disordered stretches follow at residues 51-75 (FQIP…ETAF), 95-149 (INTT…KKQK), 165-196 (PTAA…TTNT), and 211-252 (KNQE…KNRR). Residues 169 to 179 (VKKKPPAKKSA) are compositionally biased toward basic residues. Residues 180-196 (KNAASQPTSPTLSTTNT) are compositionally biased toward low complexity. The segment covering 220–239 (DNSEESDSDEEDFENGDNEN) has biased composition (acidic residues). One can recognise a bZIP domain in the interval 246 to 309 (GDRKNRRLLK…QLMKDKVRYL (64 aa)). The interval 248 to 268 (RKNRRLLKNREAAQLFRQRQK) is basic motif. The tract at residues 274–281 (LESKASSL) is leucine-zipper. Residues 324–362 (SVVNQDNINNLNNNLNGLQNQQNNNNNNNNNNNNNNNNN) adopt a coiled-coil conformation. The tract at residues 336 to 418 (NNLNGLQNQQ…DSLLFNLPPD (83 aa)) is disordered.

This sequence belongs to the bZIP family.

The protein resides in the nucleus. Functionally, probable transcriptional regulator. In Dictyostelium discoideum (Social amoeba), this protein is Probable basic-leucine zipper transcription factor E (bzpE).